Reading from the N-terminus, the 86-residue chain is Large ribosomal subunit protein bL27c (86 aa).

A disordered region spans residues 1–27 (MAHKKGSGSTRNGRDSNSKRLGVKKYG).

It belongs to the bacterial ribosomal protein bL27 family.

It localises to the plastid. Its subcellular location is the chloroplast. The chain is Large ribosomal subunit protein bL27c (rpl27) from Porphyra purpurea (Red seaweed).